The following is a 161-amino-acid chain: Cyclic pyranopterin monophosphate synthase (161 aa).

Residues 73 to 75 (LCH) and 110 to 111 (ME) contribute to the substrate site. The active site involves Asp-125.

This sequence belongs to the MoaC family. Homohexamer; trimer of dimers.

The catalysed reaction is (8S)-3',8-cyclo-7,8-dihydroguanosine 5'-triphosphate = cyclic pyranopterin phosphate + diphosphate. It participates in cofactor biosynthesis; molybdopterin biosynthesis. Functionally, catalyzes the conversion of (8S)-3',8-cyclo-7,8-dihydroguanosine 5'-triphosphate to cyclic pyranopterin monophosphate (cPMP). The polypeptide is Cyclic pyranopterin monophosphate synthase (Pseudomonas syringae pv. syringae (strain B728a)).